We begin with the raw amino-acid sequence, 75 residues long: Large ribosomal subunit protein bL31 (75 aa).

It belongs to the bacterial ribosomal protein bL31 family. Type A subfamily. In terms of assembly, part of the 50S ribosomal subunit.

In terms of biological role, binds the 23S rRNA. The polypeptide is Large ribosomal subunit protein bL31 (Chlorobaculum tepidum (strain ATCC 49652 / DSM 12025 / NBRC 103806 / TLS) (Chlorobium tepidum)).